Here is a 203-residue protein sequence, read N- to C-terminus: Dual-action ribosomal maturation protein DarP (203 aa).

2 disordered regions span residues 1–31 and 182–203; these read MPPM…SKSQ and GGAS…DDEA. The segment covering 186–203 has biased composition (acidic residues); that stretch reads DSDDEAADDAGDDHDDEA.

This sequence belongs to the DarP family.

Its subcellular location is the cytoplasm. Member of a network of 50S ribosomal subunit biogenesis factors which assembles along the 30S-50S interface, preventing incorrect 23S rRNA structures from forming. Promotes peptidyl transferase center (PTC) maturation. The sequence is that of Dual-action ribosomal maturation protein DarP from Burkholderia cenocepacia (strain HI2424).